A 350-amino-acid chain; its full sequence is Galactokinase (350 aa).

14-17 (EHTD) lines the substrate pocket. ATP contacts are provided by residues serine 46 and 96–102 (GAGLSSS). Residues serine 102 and glutamate 134 each contribute to the Mg(2+) site. Aspartate 146 functions as the Proton acceptor in the catalytic mechanism. Tyrosine 196 is a binding site for substrate.

This sequence belongs to the GHMP kinase family. GalK subfamily.

It is found in the cytoplasm. The catalysed reaction is alpha-D-galactose + ATP = alpha-D-galactose 1-phosphate + ADP + H(+). It functions in the pathway carbohydrate metabolism; galactose metabolism. In terms of biological role, catalyzes the transfer of the gamma-phosphate of ATP to D-galactose to form alpha-D-galactose-1-phosphate (Gal-1-P). The polypeptide is Galactokinase (Thermotoga maritima (strain ATCC 43589 / DSM 3109 / JCM 10099 / NBRC 100826 / MSB8)).